We begin with the raw amino-acid sequence, 334 residues long: Putative B3 domain-containing protein At3g49610 (334 aa).

Disordered regions lie at residues 69–89 (ERRTLGSSPTKTNTLFEGSEK) and 133–178 (DEFE…KFDP). Composition is skewed to polar residues over residues 73–84 (LGSSPTKTNTLF) and 141–157 (KSPTIRNSQSSPSSCLM). Residues 161 to 173 (KRKRYQSSGKSKK) are compositionally biased toward basic residues. A DNA-binding region (TF-B3) is located at residues 229-334 (FNKLLRNDFL…GVLCFALEKE (106 aa)).

It is found in the nucleus. This chain is Putative B3 domain-containing protein At3g49610, found in Arabidopsis thaliana (Mouse-ear cress).